The primary structure comprises 354 residues: UDP-3-O-acylglucosamine N-acyltransferase (354 aa).

His247 serves as the catalytic Proton acceptor.

It belongs to the transferase hexapeptide repeat family. LpxD subfamily. As to quaternary structure, homotrimer.

It carries out the reaction a UDP-3-O-[(3R)-3-hydroxyacyl]-alpha-D-glucosamine + a (3R)-hydroxyacyl-[ACP] = a UDP-2-N,3-O-bis[(3R)-3-hydroxyacyl]-alpha-D-glucosamine + holo-[ACP] + H(+). The protein operates within bacterial outer membrane biogenesis; LPS lipid A biosynthesis. Its function is as follows. Catalyzes the N-acylation of UDP-3-O-acylglucosamine using 3-hydroxyacyl-ACP as the acyl donor. Is involved in the biosynthesis of lipid A, a phosphorylated glycolipid that anchors the lipopolysaccharide to the outer membrane of the cell. The chain is UDP-3-O-acylglucosamine N-acyltransferase from Chlamydia trachomatis serovar A (strain ATCC VR-571B / DSM 19440 / HAR-13).